The following is a 132-amino-acid chain: Protein p15 (132 aa).

In terms of biological role, may play a role in infectivity. This chain is Protein p15, found in Panicum mosaic virus (strain United States/Kansas 109S) (PMV).